The primary structure comprises 271 residues: GPN-loop GTPase 3 (271 aa).

Residue 13–18 coordinates GTP; that stretch reads GAGKST. Positions 70–72 match the Gly-Pro-Asn (GPN)-loop; involved in dimer interface motif; the sequence is GPN. Residue 173-176 participates in GTP binding; the sequence is SKLD.

The protein belongs to the GPN-loop GTPase family. Heterodimers with GPN1 or GPN2. Binds to RNA polymerase II (RNAPII).

Small GTPase required for proper nuclear import of RNA polymerase II and III (RNAPII and RNAPIII). May act at an RNAP assembly step prior to nuclear import. The polypeptide is GPN-loop GTPase 3 (Kluyveromyces lactis (strain ATCC 8585 / CBS 2359 / DSM 70799 / NBRC 1267 / NRRL Y-1140 / WM37) (Yeast)).